The sequence spans 399 residues: Flavohemoprotein (399 aa).

Positions 1–138 (MLAEKTRSII…IADIFITVEK (138 aa)) constitute a Globin domain. The residue at position 22 (threonine 22) is a Phosphothreonine. Residue histidine 85 participates in heme b binding. Residues tyrosine 95 and glutamate 137 each act as charge relay system in the active site. Positions 146-399 (WPGWKPFDIT…FGPKMSTVQV (254 aa)) are reductase. An FAD-binding FR-type domain is found at 147 to 264 (PGWKPFDITA…SAPAGDFAIN (118 aa)). FAD-binding positions include tyrosine 189 and 207–210 (RHYS). 281–286 (GVGVTP) contributes to the NADP(+) binding site. 389 to 392 (PFGP) provides a ligand contact to FAD.

It belongs to the globin family. Two-domain flavohemoproteins subfamily. The protein in the C-terminal section; belongs to the flavoprotein pyridine nucleotide cytochrome reductase family. FAD is required as a cofactor. Requires heme b as cofactor.

The protein localises to the cytoplasm. The enzyme catalyses 2 nitric oxide + NADPH + 2 O2 = 2 nitrate + NADP(+) + H(+). The catalysed reaction is 2 nitric oxide + NADH + 2 O2 = 2 nitrate + NAD(+) + H(+). In terms of biological role, is involved in NO detoxification in an aerobic process, termed nitric oxide dioxygenase (NOD) reaction that utilizes O(2) and NAD(P)H to convert NO to nitrate, which protects the fungus from various noxious nitrogen compounds. Therefore, plays a central role in the inducible response to nitrosative stress. Its function is as follows. In the presence of oxygen and NADH, it has NADH oxidase activity, which leads to the generation of superoxide and H(2)O(2). Under anaerobic conditions, it also exhibits nitric oxide reductase and FAD reductase activities. However, all these reactions are much lower than NOD activity. This is Flavohemoprotein (YHB1) from Saccharomyces cerevisiae (strain ATCC 204508 / S288c) (Baker's yeast).